The following is a 326-amino-acid chain: Polycomb complex protein BMI-1 (326 aa).

Residues 18–57 (CVLCGGYFIDATTIIECLHSFCKTCIVRYLETSKYCPICD) form an RING-type zinc finger. Positions 81–95 (KLVPGLFKNEMKRRR) match the Nuclear localization signal motif. An interaction with PHC2 region spans residues 162–182 (RYLRCPAAMTVMHLRKFLRSK). Residues 164-228 (LRCPAAMTVM…GPLPLKYRVR (65 aa)) are interaction with E4F1. Positions 236–326 (ISHQRDGLTN…VNGSSATSSG (91 aa)) are disordered. A compositionally biased stretch (low complexity) spans 266–278 (PSTSSCLPSPSTP). Over residues 279–309 (VQSPHPQFPHISSTMNGTSNSPSGNHQSSFA) the composition is skewed to polar residues. Residues 315 to 326 (SSVNGSSATSSG) show a composition bias toward low complexity.

In terms of assembly, component of a PRC1-like complex. Identified in a PRC1-like HPRC-H complex with CBX2, CBX4, CBX8, PHC1, PHC2, PHC3 RING1 and RNF2. Interacts with RNF2/RING2. Interacts with RING1. Part of a complex that contains RNF2, UB2D3 and BMI1, where RNF2 and BMI1 form a tight heterodimer, and UB2D3 interacts only with RNF2. The complex composed of RNF2, UB2D3 and BMI1 binds nucleosomes, and has activity only with nucleosomal histone H2A. Interacts with CBX7 and CBX8. Interacts with SPOP. Part of a complex consisting of BMI1, CUL3 and SPOP. Interacts with E4F1. Interacts with PHC2. Interacts with zinc finger protein ZNF277. May be part of a complex including at least ZNF277, BMI1 and RNF2/RING2. Post-translationally, monoubiquitinated. May be polyubiquitinated; which does not lead to proteasomal degradation.

It localises to the nucleus. The protein localises to the cytoplasm. Its function is as follows. Component of a Polycomb group (PcG) multiprotein PRC1-like complex, a complex class required to maintain the transcriptionally repressive state of many genes, including Hox genes, throughout development. PcG PRC1 complex acts via chromatin remodeling and modification of histones; it mediates monoubiquitination of histone H2A 'Lys-119', rendering chromatin heritably changed in its expressibility. The complex composed of RNF2, UB2D3 and BMI1 binds nucleosomes, and has activity only with nucleosomal histone H2A. In the PRC1-like complex, regulates the E3 ubiquitin-protein ligase activity of RNF2/RING2. The protein is Polycomb complex protein BMI-1 (BMI1) of Homo sapiens (Human).